The sequence spans 436 residues: WD repeat domain phosphoinositide-interacting protein 2 (436 aa).

A WD 1 repeat occupies 182–222 (AHDSPLAALAFDASGTKLATASEKGTVIRVFSIPEGQKLFE). Positions 223 to 226 (FRRG) match the L/FRRG motif motif. WD repeat units follow at residues 228–267 (KRCV…EKPQ) and 311–349 (GHKN…GGEC).

The protein belongs to the WD repeat PROPPIN family.

It localises to the preautophagosomal structure membrane. In terms of biological role, component of the autophagy machinery that controls the major intracellular degradation process by which cytoplasmic materials are packaged into autophagosomes and delivered to lysosomes for degradation. Involved in an early step of the formation of preautophagosomal structures. The polypeptide is WD repeat domain phosphoinositide-interacting protein 2 (WIPI2) (Gallus gallus (Chicken)).